Consider the following 116-residue polypeptide: Somatostatin (116 aa).

Positions 1–24 are cleaved as a signal peptide; sequence MLSCRLQCALAALSIVLALGCVTG. Positions 25-88 are excised as a propeptide; the sequence is APSDPRLRQF…QDEMRLELQR (64 aa). Ala43 bears the Alanine amide mark. Residues 62 to 82 are disordered; the sequence is QTENDALEPEDLSQAAEQDEM. An intrachain disulfide couples Cys105 to Cys116.

This sequence belongs to the somatostatin family. In terms of processing, C-terminal amidation of the neuronostatin peptide is required for its biological activity, including for the regulation of mean arterial pressure.

It is found in the secreted. Its function is as follows. Inhibits the secretion of pituitary hormones, including that of growth hormone/somatotropin (GH1), PRL, ACTH, luteinizing hormone (LH) and TSH. Also impairs ghrelin- and GnRH-stimulated secretion of GH1 and LH; the inhibition of ghrelin-stimulated secretion of GH1 can be further increased by neuronostatin. In terms of biological role, may enhance low-glucose-induced glucagon release by pancreatic alpha cells. This effect may be mediated by binding to GPR107 and PKA activation. May regulate cardiac contractile function. May compromise cardiomyocyte viability. In the central nervous system, may impair memory retention and may affect hippocampal excitability. May also have anxiolytic and anorexigenic effects. May play a role in arterial pressure regulation. May inhibit basal, but not ghrelin- or GnRH-stimulated secretion of GH1 or LH, but does not affect the release of other pituitary hormones, including PRL, ACTH, FSH or TSH. Potentiates inhibitory action of somatostatin on ghrelin-stimulated secretion of GH1, but not that on GnRH-stimulated secretion of LH. The polypeptide is Somatostatin (SST) (Homo sapiens (Human)).